Here is a 417-residue protein sequence, read N- to C-terminus: Gamma-glutamyl phosphate reductase (417 aa).

The protein belongs to the gamma-glutamyl phosphate reductase family.

It localises to the cytoplasm. The catalysed reaction is L-glutamate 5-semialdehyde + phosphate + NADP(+) = L-glutamyl 5-phosphate + NADPH + H(+). The protein operates within amino-acid biosynthesis; L-proline biosynthesis; L-glutamate 5-semialdehyde from L-glutamate: step 2/2. Its function is as follows. Catalyzes the NADPH-dependent reduction of L-glutamate 5-phosphate into L-glutamate 5-semialdehyde and phosphate. The product spontaneously undergoes cyclization to form 1-pyrroline-5-carboxylate. This chain is Gamma-glutamyl phosphate reductase, found in Meiothermus ruber.